Reading from the N-terminus, the 338-residue chain is Solute carrier family 35 member G5 (338 aa).

Residues Met1–His28 form a disordered region. A run of 9 helical transmembrane segments spans residues Thr37–Leu57, Leu67–Leu87, Cys105–Val125, Cys160–Leu180, Ala190–Tyr210, Thr221–Leu241, Leu250–Val270, Leu281–Leu301, and Ile310–Cys330. The 126-residue stretch at Leu49–Gly174 folds into the EamA 1 domain. The EamA 2 domain occupies Tyr272–Ala325.

Belongs to the SLC35G solute transporter family.

Its subcellular location is the membrane. In Gorilla gorilla gorilla (Western lowland gorilla), this protein is Solute carrier family 35 member G5 (SLC35G5).